Here is a 246-residue protein sequence, read N- to C-terminus: Major prion protein (246 aa).

Residues 1 to 15 (MLVLFVATWSDLGLC) form the signal peptide. The tract at residues 16 to 223 (KKRPKPGGWN…ESQAYYQRGS (208 aa)) is interaction with GRB2, ERI3 and SYN1. Residues 18-102 (RPKPGGWNTG…HKPSKPKTSM (85 aa)) form a disordered region. 5 repeat units span residues 44–52 (PQGGGGWGQ), 53–60 (PHGGGWGQ), 61–68 (PHGGGWGQ), 69–76 (PHGGGWGQ), and 77–84 (PHGGGWGQ). A 5 X 8 AA tandem repeats of P-H-G-G-G-W-G-Q region spans residues 44-84 (PQGGGGWGQPHGGGWGQPHGGGWGQPHGGGWGQPHGGGWGQ). Over residues 45–88 (QGGGGWGQPHGGGWGQPHGGGWGQPHGGGWGQPHGGGWGQGGGT) the composition is skewed to gly residues. Residues His54, Gly55, Gly56, His62, Gly63, Gly64, His70, Gly71, Gly72, His78, Gly79, and Gly80 each contribute to the Cu(2+) site. Basic residues predominate over residues 91–102 (QWHKPSKPKTSM). A disulfide bridge links Cys172 with Cys207. N-linked (GlcNAc...) asparagine glycans are attached at residues Asn174 and Asn190. The GPI-anchor amidated serine moiety is linked to residue Ser223. The propeptide at 224-246 (SMVLFSSPPVILLISFLIFLIVG) is removed in mature form.

This sequence belongs to the prion family. As to quaternary structure, monomer and homodimer. Has a tendency to aggregate into amyloid fibrils containing a cross-beta spine, formed by a steric zipper of superposed beta-strands. Soluble oligomers may represent an intermediate stage on the path to fibril formation. Copper binding may promote oligomerization. Interacts with GRB2, APP, ERI3/PRNPIP and SYN1. Mislocalized cytosolically exposed PrP interacts with MGRN1; this interaction alters MGRN1 subcellular location and causes lysosomal enlargement. Interacts with KIAA1191.

It is found in the cell membrane. It localises to the golgi apparatus. Functionally, its primary physiological function is unclear. Has cytoprotective activity against internal or environmental stresses. May play a role in neuronal development and synaptic plasticity. May be required for neuronal myelin sheath maintenance. May play a role in iron uptake and iron homeostasis. Soluble oligomers are toxic to cultured neuroblastoma cells and induce apoptosis (in vitro). Association with GPC1 (via its heparan sulfate chains) targets PRNP to lipid rafts. Also provides Cu(2+) or Zn(2+) for the ascorbate-mediated GPC1 deaminase degradation of its heparan sulfate side chains. The protein is Major prion protein (PRNP) of Cercopithecus mona (Mona monkey).